Here is a 571-residue protein sequence, read N- to C-terminus: Putative diflavin flavoprotein A 1 (571 aa).

Positions Glu-43 to His-236 are zinc metallo-hydrolase. Residues His-92, Glu-94, Asp-96, His-159, Asp-178, and His-236 each contribute to the Fe cation site. The Flavodoxin-like domain occupies Val-265–Ser-426. A flavodoxin-reductase-like region spans residues Gly-427–Tyr-571.

In the N-terminal section; belongs to the zinc metallo-hydrolase group 3 family. This sequence in the C-terminal section; belongs to the flavodoxin reductase family. Requires Fe cation as cofactor.

Functionally, mediates electron transfer from NADH to oxygen, reducing it to water. This modular protein has 3 redox cofactors, in other organisms the same activity requires 2 or 3 proteins. This Thermosynechococcus vestitus (strain NIES-2133 / IAM M-273 / BP-1) protein is Putative diflavin flavoprotein A 1 (dfa1).